We begin with the raw amino-acid sequence, 69 residues long: DNA-directed RNA polymerase subunit epsilon (69 aa).

It belongs to the RNA polymerase subunit epsilon family. As to quaternary structure, RNAP is composed of a core of 2 alpha, a beta and a beta' subunit. The core is associated with a delta subunit, and at least one of epsilon or omega. When a sigma factor is associated with the core the holoenzyme is formed, which can initiate transcription.

It catalyses the reaction RNA(n) + a ribonucleoside 5'-triphosphate = RNA(n+1) + diphosphate. A non-essential component of RNA polymerase (RNAP). In Bacillus velezensis (strain DSM 23117 / BGSC 10A6 / LMG 26770 / FZB42) (Bacillus amyloliquefaciens subsp. plantarum), this protein is DNA-directed RNA polymerase subunit epsilon.